The following is a 232-amino-acid chain: Ribose-5-phosphate isomerase A (232 aa).

Substrate is bound by residues 31–34, 88–91, and 101–104; these read TGST, DGAD, and KGGG. The active-site Proton acceptor is Glu110. Lys128 is a binding site for substrate.

Belongs to the ribose 5-phosphate isomerase family. As to quaternary structure, homodimer.

The catalysed reaction is aldehydo-D-ribose 5-phosphate = D-ribulose 5-phosphate. It functions in the pathway carbohydrate degradation; pentose phosphate pathway; D-ribose 5-phosphate from D-ribulose 5-phosphate (non-oxidative stage): step 1/1. Functionally, catalyzes the reversible conversion of ribose-5-phosphate to ribulose 5-phosphate. This Lactobacillus johnsonii (strain CNCM I-12250 / La1 / NCC 533) protein is Ribose-5-phosphate isomerase A.